The chain runs to 563 residues: Nigrin b (563 aa).

A signal peptide spans 1 to 25; the sequence is MRVVAAAMLYFYIVVLAICSVGIQG. Glu188 is an active-site residue. The N-linked (GlcNAc...) asparagine glycan is linked to Asn221. Intrachain disulfides connect Cys274-Cys302, Cys319-Cys338, and Cys360-Cys377. Ricin B-type lectin domains follow at residues 305–431 and 434–559; these read RTSF…WTVT and VKPI…WVTQ. A 1-alpha repeat occupies 316–356; the sequence is DGLCVDVRNGYDTDGTPLQLWPCGTQRNQRWTFDSDDTIRS. The stretch at 357 to 397 is one 1-beta repeat; that stretch reads MGKCMTANGLNNGSNIVIFNCSTAAENAIKWEVPIDGSIIN. Asn368 and Asn376 each carry an N-linked (GlcNAc...) asparagine glycan. One copy of the 1-gamma repeat lies at 400-432; it reads SGLVMTAPRAASRTILLLEDNIYAASQGWTVTN. One copy of the 2-alpha repeat lies at 445-482; it reads KEMCLQSNGENNGVWMEDCEATSLQQQWALYGDRTIRV. Cys448 and Cys463 are disulfide-bonded. A glycan (N-linked (GlcNAc...) asparagine) is linked at Asn483. Residues 486–524 form a 2-beta repeat; sequence RGLCVTTNGYNSKDLIIILKCQGLPSQRWFFNSDGAIVN. A disulfide bridge links Cys489 with Cys506. One copy of the 2-gamma repeat lies at 527–554; it reads SRHVMDVRASNVSLREIIIFPATGNPNQ. A glycan (N-linked (GlcNAc...) asparagine) is linked at Asn537.

This sequence in the N-terminal section; belongs to the ribosome-inactivating protein family. Type 2 RIP subfamily. As to quaternary structure, disulfide-linked dimer of A and B chains.

It catalyses the reaction Endohydrolysis of the N-glycosidic bond at one specific adenosine on the 28S rRNA.. Its function is as follows. Non-toxic type 2 RIP which strongly inhibits mammalian protein synthesis but does not affect plant nor bacterial protein synthesis. The A chain is responsible for inhibiting protein synthesis through the catalytic inactivation of 60S ribosomal subunits by removing adenine from position 4,324 of 28S rRNA. The B chain is a galactose-specific lectin that facilitates the binding of nigrin b to the cell membrane that precedes endocytosis. This Sambucus nigra (European elder) protein is Nigrin b.